The sequence spans 178 residues: Ribulose bisphosphate carboxylase small subunit, chloroplastic (178 aa).

The transit peptide at Met-1–Arg-55 directs the protein to the chloroplast.

Belongs to the RuBisCO small chain family. As to quaternary structure, heterohexadecamer of 8 large and 8 small subunits.

The protein resides in the plastid. Its subcellular location is the chloroplast. In terms of biological role, ruBisCO catalyzes two reactions: the carboxylation of D-ribulose 1,5-bisphosphate, the primary event in carbon dioxide fixation, as well as the oxidative fragmentation of the pentose substrate. Both reactions occur simultaneously and in competition at the same active site. Although the small subunit is not catalytic it is essential for maximal activity. The chain is Ribulose bisphosphate carboxylase small subunit, chloroplastic from Zantedeschia aethiopica (White calla lily).